The primary structure comprises 693 residues: Heat shock protein homolog SSE1 (693 aa).

Ser2 carries the N-acetylserine modification. Lys195 is covalently cross-linked (Glycyl lysine isopeptide (Lys-Gly) (interchain with G-Cter in ubiquitin)). Thr242 is modified (phosphothreonine). A disordered region spans residues 653-693 (IRSKQEASQMAAMAEKLAAQRKAEAEKKEEKKDTEGDVDMD). Ser660 is modified (phosphoserine). Over residues 673–687 (RKAEAEKKEEKKDTE) the composition is skewed to basic and acidic residues.

It belongs to the heat shock protein 70 family.

Its subcellular location is the cytoplasm. In terms of biological role, has a calcium-dependent calmodulin-binding activity. Required for normal growth at various temperatures. In Saccharomyces cerevisiae (strain ATCC 204508 / S288c) (Baker's yeast), this protein is Heat shock protein homolog SSE1 (SSE1).